The chain runs to 482 residues: Serine carboxypeptidase-like 26 (482 aa).

A signal peptide spans methionine 1–alanine 28. 3 disulfides stabilise this stretch: cysteine 101-cysteine 366, cysteine 263-cysteine 274, and cysteine 298-cysteine 333. N-linked (GlcNAc...) asparagine glycosylation occurs at asparagine 152. Serine 194 is a catalytic residue. Asparagine 269, asparagine 301, asparagine 354, and asparagine 375 each carry an N-linked (GlcNAc...) asparagine glycan. Catalysis depends on residues aspartate 403 and histidine 455.

The protein belongs to the peptidase S10 family.

It localises to the secreted. Functionally, acts as a positive regulator of grain size by controlling grain width, filling and weight. High expression of GS5 in the grain is correlated with large grain size. This Oryza sativa subsp. japonica (Rice) protein is Serine carboxypeptidase-like 26.